The following is a 253-amino-acid chain: PAXIP1-associated glutamate-rich protein 1 (253 aa).

2 disordered regions span residues 1–109 (MSLV…MPPP) and 128–253 (QAEI…QRKY). A compositionally biased stretch (basic and acidic residues) spans 51–62 (EGGREEAEHEGS). The sufficient for interaction with NCOA1 stretch occupies residues 116 to 160 (YELLAAHGTLELQAEILPRRPPTPEAQSEEERSDEEPEAKEEEEE). Position 138 is a phosphothreonine (T138). Residues 142-159 (QSEEERSDEEPEAKEEEE) are compositionally biased toward acidic residues. A phosphoserine mark is found at S143 and S148. Residues 161–253 (KPHMPTEFDF…GSLFPRQRKY (93 aa)) are sufficient for interaction with ESR1. Basic and acidic residues predominate over residues 195 to 223 (QKREARLDKVLSDMKRHKKLEEQILRTGR). S237 carries the phosphoserine modification.

In terms of assembly, component of the KMT2 family MLL2/MLL3 complex, at least composed of the histone methyltransferases KMT2D and/or KMT2C, the common complex subunits ASH2L, RBBP5, WDR5 and DPY30, and the complex type-specific subunits PAXIP1/PTIP, PAGR1, NCOA6 and KDM6A; PAXIP1 is required for the association with the MLL2/MLL3 complex. Forms a constitutive complex with PAXIP1/PTIP independently of the MLL2/MLL3 complex. Interacts with NCOA1, ESR1, NR3C1, AR.

It localises to the nucleus. Its function is as follows. Its association with the histone methyltransferase MLL2/MLL3 complex is suggesting a role in epigenetic transcriptional activation. However, in association with PAXIP1/PTIP is proposed to function at least in part independently of the MLL2/MLL3 complex. Proposed to be recruited by PAXIP1 to sites of DNA damage where the PAGR1:PAXIP1 complex is required for cell survival in response to DNA damage independently of the MLL2/MLL3 complex. However, its function in DNA damage has been questioned. During immunoglobulin class switching in activated B-cells is involved in transcription regulation of downstream switch regions at the immunoglobulin heavy-chain (Igh) locus independently of the MLL2/MLL3 complex. Involved in both estrogen receptor-regulated gene transcription and estrogen-stimulated G1/S cell-cycle transition. Acts as a transcriptional cofactor for nuclear hormone receptors. Inhibits the induction properties of several steroid receptors such as NR3C1, AR and PPARG; the mechanism of inhibition appears to be gene-dependent. This is PAXIP1-associated glutamate-rich protein 1 (PAGR1) from Bos taurus (Bovine).